We begin with the raw amino-acid sequence, 239 residues long: Zwei Ig domain protein zig-7 (239 aa).

An N-terminal signal peptide occupies residues 1–21 (MKLINCISIALLCTLVDFSSA). N-linked (GlcNAc...) asparagine glycosylation occurs at asparagine 43. Residues 145–211 (PHVIGAERRG…TEDHIGKYRC (67 aa)) enclose the Ig-like C2-type domain. Residues cysteine 164 and cysteine 211 are joined by a disulfide bond.

Expressed in body wall muscles.

Its subcellular location is the secreted. Probably not involved in maintaining the position of ASI and ASH head neuron cell bodies and ventral nerve cord axons of PVQ, PVP, RMEV, AVK and HSN neurons. The chain is Zwei Ig domain protein zig-7 from Caenorhabditis elegans.